Consider the following 1127-residue polypeptide: Disease resistance protein RPS6 (1127 aa).

An N-acetylmethionine modification is found at methionine 1. The 165-residue stretch at tryptophan 12–methionine 176 folds into the TIR domain. Residue glutamate 87 is part of the active site. Residues glutamate 191 to lysine 452 enclose the NB-ARC domain. 11 LRR repeats span residues methionine 197–lysine 221, isoleucine 540–lysine 563, proline 587–proline 609, glutamate 610–leucine 632, alanine 633–threonine 656, leucine 658–leucine 679, asparagine 680–serine 704, serine 766–leucine 790, tyrosine 791–leucine 813, aspartate 814–serine 834, and threonine 835–leucine 857.

As to quaternary structure, interacts with EDS1. As to expression, ubiquitous.

It carries out the reaction NAD(+) + H2O = ADP-D-ribose + nicotinamide + H(+). Disease resistance (R) protein that specifically recognizes the hopA1 type III effector avirulence protein from Pseudomonas syringae. Resistance proteins guard the plant against pathogens that contain an appropriate avirulence protein via an indirect interaction with this avirulence protein. That triggers a defense system including the hypersensitive response, which restricts the pathogen growth. In Arabidopsis thaliana (Mouse-ear cress), this protein is Disease resistance protein RPS6 (RPS6).